The chain runs to 78 residues: U-scoloptoxin(04)-Er1d (78 aa).

Residues 1–24 (MTRHLIFAAMLLVCLFVCWNAVGA) form the signal peptide. Positions 25 to 28 (RDAR) are excised as a propeptide.

The protein belongs to the scoloptoxin-04 family. Contains 2 disulfide bonds. Expressed by the venom gland.

It localises to the secreted. This chain is U-scoloptoxin(04)-Er1d, found in Ethmostigmus rubripes (Giant centipede).